The primary structure comprises 371 residues: Glutamate 5-kinase (371 aa).

Lys-14 lines the ATP pocket. Residues Ser-54, Asp-141, and Asn-153 each contribute to the substrate site. 173–174 contacts ATP; the sequence is TD. The PUA domain maps to 280 to 357; sequence AGSLIVDAGA…SDIEQLLGYI (78 aa).

It belongs to the glutamate 5-kinase family.

It is found in the cytoplasm. It catalyses the reaction L-glutamate + ATP = L-glutamyl 5-phosphate + ADP. It participates in amino-acid biosynthesis; L-proline biosynthesis; L-glutamate 5-semialdehyde from L-glutamate: step 1/2. Catalyzes the transfer of a phosphate group to glutamate to form L-glutamate 5-phosphate. The polypeptide is Glutamate 5-kinase (Azoarcus sp. (strain BH72)).